The sequence spans 431 residues: Glutamate-1-semialdehyde 2,1-aminomutase 1 (431 aa).

An N6-(pyridoxal phosphate)lysine modification is found at K268.

The protein belongs to the class-III pyridoxal-phosphate-dependent aminotransferase family. HemL subfamily. In terms of assembly, homodimer. Requires pyridoxal 5'-phosphate as cofactor.

The protein resides in the cytoplasm. It catalyses the reaction (S)-4-amino-5-oxopentanoate = 5-aminolevulinate. It participates in porphyrin-containing compound metabolism; protoporphyrin-IX biosynthesis; 5-aminolevulinate from L-glutamyl-tRNA(Glu): step 2/2. This chain is Glutamate-1-semialdehyde 2,1-aminomutase 1, found in Bacillus pumilus (strain SAFR-032).